The sequence spans 779 residues: Ribonucleoside-diphosphate reductase large subunit (779 aa).

Substrate-binding positions include Ser178, 193 to 194 (SC), Gly222, 420 to 424 (NLCIE), and 614 to 618 (PTATS). Cys194 and Cys440 are joined by a disulfide. The active-site Proton acceptor is Asn420. The Cysteine radical intermediate role is filled by Cys422. Catalysis depends on Glu424, which acts as the Proton acceptor.

This sequence belongs to the ribonucleoside diphosphate reductase large chain family. Heterotetramer composed of a homodimer of the large subunit (R1) and a homodimer of the small subunit (R2). Larger multisubunit protein complex are also active, composed of (R1)n(R2)n.

It catalyses the reaction a 2'-deoxyribonucleoside 5'-diphosphate + [thioredoxin]-disulfide + H2O = a ribonucleoside 5'-diphosphate + [thioredoxin]-dithiol. Under complex allosteric control mediated by deoxynucleoside triphosphates and ATP binding. The type of nucleotide bound at the specificity site determines substrate preference. It seems probable that ATP makes the enzyme reduce CDP and UDP, dGTP favors ADP reduction and dTTP favors GDP reduction. Its function is as follows. Ribonucleoside-diphosphate reductase holoenzyme provides the precursors necessary for viral DNA synthesis. Allows virus growth in non-dividing cells. Catalyzes the biosynthesis of deoxyribonucleotides from the corresponding ribonucleotides. This chain is Ribonucleoside-diphosphate reductase large subunit, found in African swine fever virus (isolate Tick/Malawi/Lil 20-1/1983) (ASFV).